The primary structure comprises 73 residues: Bacterioferritin-associated ferredoxin (73 aa).

Residues cysteine 4 and cysteine 6 each contribute to the [2Fe-2S] cluster site. Phosphate-binding residues include arginine 26 and arginine 29. Residues cysteine 38 and cysteine 41 each contribute to the [2Fe-2S] cluster site. Residue lysine 46 coordinates phosphate.

Belongs to the Bfd family. As to quaternary structure, monomer. Interacts with BfrB; up to 12 Bfd proteins can bind to the BfrB bacterioferritin complex (BFR). One Bfd protein binds to a BfrB dimer in the BFR, with the [2Fe-2S] cluster positioned about 22 Angstroms above the heme of BfrB. Does not interact with FtnA. The cofactor is [2Fe-2S] cluster. Requires phosphate as cofactor.

Its function is as follows. Required for mobilization of iron from the bacterioferritin (BFR) complex, composed of BfrB and FtnA in varying proportions; mobilization requires the [2Fe-2S] cluster of this protein. Reduction of the BfrB heme group occurs in the presence of Bfd, strongly suggesting that the BfrB-Bfd complex allows heme to mediate electron transfer from FPR to the Fe(3+) iron core in the BFR prior to its release as Fe(2+). The protein is Bacterioferritin-associated ferredoxin of Pseudomonas aeruginosa (strain ATCC 15692 / DSM 22644 / CIP 104116 / JCM 14847 / LMG 12228 / 1C / PRS 101 / PAO1).